Reading from the N-terminus, the 151-residue chain is Probable cGMP 3',5'-cyclic phosphodiesterase subunit delta (151 aa).

Belongs to the PDE6D/unc-119 family. As to quaternary structure, interacts with Pde6.

The protein resides in the nucleus. Its subcellular location is the cytoplasm. The protein is Probable cGMP 3',5'-cyclic phosphodiesterase subunit delta of Drosophila grimshawi (Hawaiian fruit fly).